We begin with the raw amino-acid sequence, 421 residues long: Dihydroorotase (421 aa).

2 residues coordinate Zn(2+): His60 and His62. Substrate contacts are provided by residues 62 to 64 (HFR) and Asn94. Zn(2+)-binding residues include Asp151, His178, and His231. Asn277 lines the substrate pocket. Position 304 (Asp304) interacts with Zn(2+). Asp304 is an active-site residue. His308 is a substrate binding site.

Belongs to the metallo-dependent hydrolases superfamily. DHOase family. Class I DHOase subfamily. Zn(2+) serves as cofactor.

It carries out the reaction (S)-dihydroorotate + H2O = N-carbamoyl-L-aspartate + H(+). Its pathway is pyrimidine metabolism; UMP biosynthesis via de novo pathway; (S)-dihydroorotate from bicarbonate: step 3/3. Functionally, catalyzes the reversible cyclization of carbamoyl aspartate to dihydroorotate. The polypeptide is Dihydroorotase (Clostridioides difficile (strain 630) (Peptoclostridium difficile)).